Reading from the N-terminus, the 276-residue chain is Lipoyl synthase (276 aa).

Cysteine 27, cysteine 32, cysteine 38, cysteine 53, cysteine 57, cysteine 60, and serine 266 together coordinate [4Fe-4S] cluster. The 217-residue stretch at phenylalanine 39–lysine 255 folds into the Radical SAM core domain.

The protein belongs to the radical SAM superfamily. Lipoyl synthase family. The cofactor is [4Fe-4S] cluster.

The protein localises to the cytoplasm. It carries out the reaction [[Fe-S] cluster scaffold protein carrying a second [4Fe-4S](2+) cluster] + N(6)-octanoyl-L-lysyl-[protein] + 2 oxidized [2Fe-2S]-[ferredoxin] + 2 S-adenosyl-L-methionine + 4 H(+) = [[Fe-S] cluster scaffold protein] + N(6)-[(R)-dihydrolipoyl]-L-lysyl-[protein] + 4 Fe(3+) + 2 hydrogen sulfide + 2 5'-deoxyadenosine + 2 L-methionine + 2 reduced [2Fe-2S]-[ferredoxin]. The protein operates within protein modification; protein lipoylation via endogenous pathway; protein N(6)-(lipoyl)lysine from octanoyl-[acyl-carrier-protein]: step 2/2. In terms of biological role, catalyzes the radical-mediated insertion of two sulfur atoms into the C-6 and C-8 positions of the octanoyl moiety bound to the lipoyl domains of lipoate-dependent enzymes, thereby converting the octanoylated domains into lipoylated derivatives. In Aquifex aeolicus (strain VF5), this protein is Lipoyl synthase.